We begin with the raw amino-acid sequence, 51 residues long: Basic phospholipase A2 Bfon11 (51 aa).

Residues Y27, G29, and G31 each contribute to the Ca(2+) site. C28 and C43 are oxidised to a cystine. The active site involves H46. D47 is a Ca(2+) binding site.

It belongs to the phospholipase A2 family. Group II subfamily. D49 sub-subfamily. Ca(2+) is required as a cofactor. In terms of tissue distribution, expressed by the venom gland.

Its subcellular location is the secreted. The enzyme catalyses a 1,2-diacyl-sn-glycero-3-phosphocholine + H2O = a 1-acyl-sn-glycero-3-phosphocholine + a fatty acid + H(+). Snake venom phospholipase A2 (PLA2) that impairs hemostasis. PLA2 catalyzes the calcium-dependent hydrolysis of the 2-acyl groups in 3-sn-phosphoglycerides. This Bothrops fonsecai (Fonseca's lancehead) protein is Basic phospholipase A2 Bfon11.